Consider the following 388-residue polypeptide: Cytochrome b (388 aa).

4 helical membrane passes run 32–52, 76–98, 113–133, and 179–199; these read FGSL…TLAM, WLIR…LHVG, TWTI…LGYV, and FFAL…MHLI. 2 residues coordinate heme b: histidine 82 and histidine 96. The heme b site is built by histidine 183 and histidine 197. Histidine 202 lines the a ubiquinone pocket. A run of 4 helical transmembrane segments spans residues 226 to 246, 290 to 310, 322 to 342, and 349 to 369; these read FIFK…IFIF, LLGV…PITD, LSKI…QLGA, and FIEF…IIVP.

This sequence belongs to the cytochrome b family. In terms of assembly, fungal cytochrome b-c1 complex contains 10 subunits; 3 respiratory subunits, 2 core proteins and 5 low-molecular weight proteins. Cytochrome b-c1 complex is a homodimer. Heme b serves as cofactor.

The protein resides in the mitochondrion inner membrane. In terms of biological role, component of the ubiquinol-cytochrome c reductase complex (complex III or cytochrome b-c1 complex) that is part of the mitochondrial respiratory chain. The b-c1 complex mediates electron transfer from ubiquinol to cytochrome c. Contributes to the generation of a proton gradient across the mitochondrial membrane that is then used for ATP synthesis. This is Cytochrome b (cob) from Zymoseptoria tritici (Speckled leaf blotch fungus).